A 210-amino-acid chain; its full sequence is Small ribosomal subunit protein uS7 (210 aa).

Residues 1–22 (MSDEQPAEDETEEAAAESEDTQ) are compositionally biased toward acidic residues. The segment at 1 to 23 (MSDEQPAEDETEEAAAESEDTQE) is disordered.

Belongs to the universal ribosomal protein uS7 family. Part of the 30S ribosomal subunit. Contacts proteins S9 and S11.

One of the primary rRNA binding proteins, it binds directly to 16S rRNA where it nucleates assembly of the head domain of the 30S subunit. Is located at the subunit interface close to the decoding center. The chain is Small ribosomal subunit protein uS7 from Halobacterium salinarum (strain ATCC 29341 / DSM 671 / R1).